Reading from the N-terminus, the 306-residue chain is Dihydroorotate dehydrogenase B (NAD(+)), catalytic subunit (306 aa).

FMN is bound by residues S24 and K48–A49. Substrate is bound by residues K48 and N72–L76. Positions 102 and 130 each coordinate FMN. Substrate is bound at residue N130. C133 serves as the catalytic Nucleophile. FMN contacts are provided by K168 and I194. N195–T196 is a substrate binding site. Residues G220, G246–G247, and G268–T269 each bind FMN.

Belongs to the dihydroorotate dehydrogenase family. Type 1 subfamily. Heterotetramer of 2 PyrK and 2 PyrD type B subunits. It depends on FMN as a cofactor.

It is found in the cytoplasm. The enzyme catalyses (S)-dihydroorotate + NAD(+) = orotate + NADH + H(+). It participates in pyrimidine metabolism; UMP biosynthesis via de novo pathway; orotate from (S)-dihydroorotate (NAD(+) route): step 1/1. In terms of biological role, catalyzes the conversion of dihydroorotate to orotate with NAD(+) as electron acceptor. This Malacoplasma penetrans (strain HF-2) (Mycoplasma penetrans) protein is Dihydroorotate dehydrogenase B (NAD(+)), catalytic subunit (pyrD).